Consider the following 161-residue polypeptide: 2-C-methyl-D-erythritol 2,4-cyclodiphosphate synthase (161 aa).

A divalent metal cation contacts are provided by Asp-10 and His-12. Residues 10–12 (DVH) and 36–37 (HS) contribute to the 4-CDP-2-C-methyl-D-erythritol 2-phosphate site. A divalent metal cation is bound at residue His-44. 4-CDP-2-C-methyl-D-erythritol 2-phosphate-binding positions include 58 to 60 (DIG), 134 to 137 (TTTE), Phe-141, and Arg-144.

It belongs to the IspF family. In terms of assembly, homotrimer. Requires a divalent metal cation as cofactor.

It carries out the reaction 4-CDP-2-C-methyl-D-erythritol 2-phosphate = 2-C-methyl-D-erythritol 2,4-cyclic diphosphate + CMP. It participates in isoprenoid biosynthesis; isopentenyl diphosphate biosynthesis via DXP pathway; isopentenyl diphosphate from 1-deoxy-D-xylulose 5-phosphate: step 4/6. Functionally, involved in the biosynthesis of isopentenyl diphosphate (IPP) and dimethylallyl diphosphate (DMAPP), two major building blocks of isoprenoid compounds. Catalyzes the conversion of 4-diphosphocytidyl-2-C-methyl-D-erythritol 2-phosphate (CDP-ME2P) to 2-C-methyl-D-erythritol 2,4-cyclodiphosphate (ME-CPP) with a corresponding release of cytidine 5-monophosphate (CMP). The protein is 2-C-methyl-D-erythritol 2,4-cyclodiphosphate synthase of Parabacteroides distasonis (strain ATCC 8503 / DSM 20701 / CIP 104284 / JCM 5825 / NCTC 11152).